Here is a 315-residue protein sequence, read N- to C-terminus: Methionyl-tRNA formyltransferase (315 aa).

113–116 serves as a coordination point for (6S)-5,6,7,8-tetrahydrofolate; that stretch reads SILP.

Belongs to the Fmt family.

The catalysed reaction is L-methionyl-tRNA(fMet) + (6R)-10-formyltetrahydrofolate = N-formyl-L-methionyl-tRNA(fMet) + (6S)-5,6,7,8-tetrahydrofolate + H(+). Functionally, attaches a formyl group to the free amino group of methionyl-tRNA(fMet). The formyl group appears to play a dual role in the initiator identity of N-formylmethionyl-tRNA by promoting its recognition by IF2 and preventing the misappropriation of this tRNA by the elongation apparatus. The chain is Methionyl-tRNA formyltransferase from Vibrio cholerae serotype O1 (strain ATCC 39541 / Classical Ogawa 395 / O395).